A 495-amino-acid polypeptide reads, in one-letter code: MLINFFSSIEVLFVIIKWILLLGYWWLITEVTIRILFKRRTVPSAMAWLLIIYVVPFIGAIIYLLLGELNLEKKRIKRSKIIWISALKKIKKLKNYKEIFTTKNSHIARSLFRLCKHRQGIGGVKSEKINILNDPDNVMQSVINDINLAKISIEMIFYIWHPGGWTNYVVEVLIKAANRGVKCRLILDSAGSKNFLKSIQVKIMRKSGIKIVEALNLNILQIFLRRMDLRQHRKMILIDNYIGYTGSMNMIDPKFFKKNRKIGEWIDIMIRMEGPVASAMRIIFSCDWEIETGENIFYAPYDTKKCNIIKKDNNYKTQVIPSGPGVSEGVIHQVLLTAIYSAKKILIMTTPYLVPSDDILHAICTASQRGVSVYIIIPKFIDSILVKWASRSFFSELLHAGVLIYQFEGGLLHTKSILVDDQLSLVGTVNLDMRSLWLNFEITLMVDNRNFGKKLKKIQTNYMSLSKVLHLKEWSKRPYWKRIIERFFYFFSPLL.

2 helical membrane-spanning segments follow: residues 9–29 (IEVLFVIIKWILLLGYWWLIT) and 46–66 (MAWLLIIYVVPFIGAIIYLLL). PLD phosphodiesterase domains lie at 227–254 (MDLRQHRKMILIDNYIGYTGSMNMIDPK) and 408–435 (EGGLLHTKSILVDDQLSLVGTVNLDMRS). Residues His232, Lys234, Asp239, His413, Lys415, and Asp420 contribute to the active site.

It belongs to the phospholipase D family. Cardiolipin synthase subfamily. ClsA sub-subfamily.

The protein resides in the cell membrane. It catalyses the reaction 2 a 1,2-diacyl-sn-glycero-3-phospho-(1'-sn-glycerol) = a cardiolipin + glycerol. Catalyzes the reversible phosphatidyl group transfer from one phosphatidylglycerol molecule to another to form cardiolipin (CL) (diphosphatidylglycerol) and glycerol. The sequence is that of Cardiolipin synthase A from Wigglesworthia glossinidia brevipalpis.